The primary structure comprises 316 residues: Sulfate adenylyltransferase subunit 2 (316 aa).

The interval 297 to 316 (RAIDRDQSGSMEKKKREGYF) is disordered.

The protein belongs to the PAPS reductase family. CysD subfamily. In terms of assembly, heterodimer composed of CysD, the smaller subunit, and CysN.

It carries out the reaction sulfate + ATP + H(+) = adenosine 5'-phosphosulfate + diphosphate. It functions in the pathway sulfur metabolism; hydrogen sulfide biosynthesis; sulfite from sulfate: step 1/3. In terms of biological role, with CysN forms the ATP sulfurylase (ATPS) that catalyzes the adenylation of sulfate producing adenosine 5'-phosphosulfate (APS) and diphosphate, the first enzymatic step in sulfur assimilation pathway. APS synthesis involves the formation of a high-energy phosphoric-sulfuric acid anhydride bond driven by GTP hydrolysis by CysN coupled to ATP hydrolysis by CysD. The sequence is that of Sulfate adenylyltransferase subunit 2 from Allorhizobium ampelinum (strain ATCC BAA-846 / DSM 112012 / S4) (Agrobacterium vitis (strain S4)).